A 340-amino-acid chain; its full sequence is Methionine import ATP-binding protein MetN (340 aa).

The ABC transporter domain occupies 2 to 241 (IRIENLTKIY…PQSSVAKEFI (240 aa)). ATP is bound at residue 38–45 (GLSGAGKS).

This sequence belongs to the ABC transporter superfamily. Methionine importer (TC 3.A.1.24) family. The complex is composed of two ATP-binding proteins (MetN), two transmembrane proteins (MetI) and a solute-binding protein (MetQ).

It localises to the cell membrane. It carries out the reaction L-methionine(out) + ATP + H2O = L-methionine(in) + ADP + phosphate + H(+). The enzyme catalyses D-methionine(out) + ATP + H2O = D-methionine(in) + ADP + phosphate + H(+). Functionally, part of the ABC transporter complex MetNIQ involved in methionine import. Responsible for energy coupling to the transport system. The polypeptide is Methionine import ATP-binding protein MetN (Desulfitobacterium hafniense (strain Y51)).